Here is a 289-residue protein sequence, read N- to C-terminus: Phospholipase A1 (289 aa).

An N-terminal signal peptide occupies residues 1–20 (MRTGPGWLLAAAALPFFACA). Over 21–52 (QEATIDKVHDTPAVRGSIIANMLQEHDNPFTL) the chain is Periplasmic. A beta stranded membrane pass occupies residues 53–65 (YPYESNYLLYTYT). The Extracellular segment spans residues 66–84 (SDLNKKAIESYNWSDNANK). A beta stranded membrane pass occupies residues 85-99 (DEVKFQLSLAFPLWR). At 100–105 (GILGDN) the chain is on the periplasmic side. A beta stranded membrane pass occupies residues 106 to 118 (SLLGASYTQRSWW). The Extracellular segment spans residues 119–128 (QLSNTGESAP). Serine 126 contributes to the Ca(2+) binding site. Residues 129–148 (FRETNYEPQLFLGFATDYSV) traverse the membrane as a beta stranded segment. Topologically, residues 149-150 (GD) are periplasmic. A beta stranded membrane pass occupies residues 151 to 164 (WTLRDAEFGYNHQS). Histidine 162 (proton acceptor) is an active-site residue. The active-site Nucleophile is the serine 164. At 165–173 (NGRSDPTSR) the chain is on the extracellular side. 2 residues coordinate Ca(2+): arginine 167 and serine 172. Residues 174–186 (SWNRLYSRLMAQN) traverse the membrane as a beta stranded segment. Topologically, residues 187-188 (GN) are periplasmic. The beta stranded transmembrane segment at 189-198 (WLVEVKPWYV) threads the bilayer. The Extracellular segment spans residues 199–216 (IGDTSDNKNITKYMGYYQ). A Ca(2+)-binding site is contributed by aspartate 204. A beta stranded transmembrane segment spans residues 217–223 (LKIGYQL). The Periplasmic segment spans residues 224–225 (GE). The beta stranded transmembrane segment at 226 to 234 (AVLSAKGQY) threads the bilayer. At 235–241 (NWNTGYG) the chain is on the extracellular side. A beta stranded transmembrane segment spans residues 242 to 250 (GAELGVSYP). At 251-255 (ITKHV) the chain is on the periplasmic side. A beta stranded transmembrane segment spans residues 256–265 (RFYTQVYSGY). Over 266–274 (GESLIDYDF) the chain is Extracellular. Residues 275–286 (NQTRVGMGVMLN) traverse the membrane as a beta stranded segment. Over 287 to 289 (DLF) the chain is Periplasmic.

This sequence belongs to the phospholipase A1 family. In terms of assembly, homodimer; dimerization is reversible, and the dimeric form is the active one. Ca(2+) serves as cofactor.

The protein resides in the cell outer membrane. It catalyses the reaction a 1,2-diacyl-sn-glycero-3-phosphocholine + H2O = a 2-acyl-sn-glycero-3-phosphocholine + a fatty acid + H(+). The catalysed reaction is a 1,2-diacyl-sn-glycero-3-phosphocholine + H2O = a 1-acyl-sn-glycero-3-phosphocholine + a fatty acid + H(+). Its function is as follows. Hydrolysis of phosphatidylcholine with phospholipase A2 (EC 3.1.1.4) and phospholipase A1 (EC 3.1.1.32) activities. This chain is Phospholipase A1 (pldA), found in Proteus vulgaris.